The following is a 455-amino-acid chain: UPF0053 protein MT1890 (455 aa).

The CNNM transmembrane domain maps to 2–205 (NLTDTVATIL…ARSGALDDAT (204 aa)). The next 4 membrane-spanning stretches (helical) occupy residues 6–26 (TVATILAILALTAGTGVFVAA), 68–88 (LGISITTLATGYLTEPLVAEL), 106–126 (LITFFALVIVTSLSMVFGELV), and 148–168 (LFSLLLTPAIRLTNGAANWIV). CBS domains follow at residues 224-285 (MTPR…AHTL) and 286-346 (LTTV…VRDE).

It belongs to the UPF0053 family.

The protein localises to the cell membrane. This chain is UPF0053 protein MT1890, found in Mycobacterium tuberculosis (strain CDC 1551 / Oshkosh).